Reading from the N-terminus, the 159-residue chain is Ribosomal RNA large subunit methyltransferase H (159 aa).

S-adenosyl-L-methionine-binding positions include leucine 76, glycine 108, and 127-132; that span reads FSKMTF.

The protein belongs to the RNA methyltransferase RlmH family. In terms of assembly, homodimer.

It is found in the cytoplasm. The catalysed reaction is pseudouridine(1915) in 23S rRNA + S-adenosyl-L-methionine = N(3)-methylpseudouridine(1915) in 23S rRNA + S-adenosyl-L-homocysteine + H(+). Functionally, specifically methylates the pseudouridine at position 1915 (m3Psi1915) in 23S rRNA. This chain is Ribosomal RNA large subunit methyltransferase H, found in Clostridium novyi (strain NT).